The following is a 381-amino-acid chain: Transaldolase 1 (381 aa).

Lys-149 serves as the catalytic Schiff-base intermediate with substrate.

The protein belongs to the transaldolase family. Type 2 subfamily.

The protein localises to the cytoplasm. The catalysed reaction is D-sedoheptulose 7-phosphate + D-glyceraldehyde 3-phosphate = D-erythrose 4-phosphate + beta-D-fructose 6-phosphate. It functions in the pathway carbohydrate degradation; pentose phosphate pathway; D-glyceraldehyde 3-phosphate and beta-D-fructose 6-phosphate from D-ribose 5-phosphate and D-xylulose 5-phosphate (non-oxidative stage): step 2/3. Transaldolase is important for the balance of metabolites in the pentose-phosphate pathway. This Streptomyces coelicolor (strain ATCC BAA-471 / A3(2) / M145) protein is Transaldolase 1 (tal1).